A 368-amino-acid polypeptide reads, in one-letter code: Glutamate 5-kinase 1 (368 aa).

An ATP-binding site is contributed by Lys-12. 3 residues coordinate substrate: Ser-52, Asp-135, and Asn-147. ATP contacts are provided by residues 167 to 168 (SD) and 209 to 215 (TGGMKTK). Residues 274-348 (QGEVVVDGSF…DNEQSEFSEK (75 aa)) enclose the PUA domain.

The protein belongs to the glutamate 5-kinase family.

It is found in the cytoplasm. It carries out the reaction L-glutamate + ATP = L-glutamyl 5-phosphate + ADP. It participates in amino-acid biosynthesis; L-proline biosynthesis; L-glutamate 5-semialdehyde from L-glutamate: step 1/2. Its function is as follows. Catalyzes the transfer of a phosphate group to glutamate to form L-glutamate 5-phosphate. The polypeptide is Glutamate 5-kinase 1 (Pseudoalteromonas translucida (strain TAC 125)).